Consider the following 329-residue polypeptide: Glycerol-3-phosphate dehydrogenase [NAD(P)+] (329 aa).

Positions 11 and 101 each coordinate NADPH. Lys101, Gly132, and Ser134 together coordinate sn-glycerol 3-phosphate. Ala136 serves as a coordination point for NADPH. The sn-glycerol 3-phosphate site is built by Lys188, Asp241, Ser251, Arg252, and Asn253. Lys188 (proton acceptor) is an active-site residue. Arg252 provides a ligand contact to NADPH. Glu278 serves as a coordination point for NADPH.

It belongs to the NAD-dependent glycerol-3-phosphate dehydrogenase family.

The protein resides in the cytoplasm. The catalysed reaction is sn-glycerol 3-phosphate + NAD(+) = dihydroxyacetone phosphate + NADH + H(+). The enzyme catalyses sn-glycerol 3-phosphate + NADP(+) = dihydroxyacetone phosphate + NADPH + H(+). It functions in the pathway membrane lipid metabolism; glycerophospholipid metabolism. Functionally, catalyzes the reduction of the glycolytic intermediate dihydroxyacetone phosphate (DHAP) to sn-glycerol 3-phosphate (G3P), the key precursor for phospholipid synthesis. The protein is Glycerol-3-phosphate dehydrogenase [NAD(P)+] of Onion yellows phytoplasma (strain OY-M).